A 789-amino-acid polypeptide reads, in one-letter code: MTIQQVLLLLLLWMWLLHPCRTEMLFRRTPDLRPKGFVGRTSGSDGKALHRQKRGWMWNQFFLLEEYTGSDYQYVGKLHSDQDKGDGSLKYILSGDGAGTLFIIDEKTGDIHATRRIDREEKAFYTLRAQAINRRTLRPVEPESEFVIKIHDINDNEPTFPEEIYTASVPEMSVVGTSVVQVTATDADDPSYGNSARIIYSILQGQPYFSVEPETGIIRTALPNMNRENREQYQVVIQAKDMGGQMGGLSGTTTVNITLTDVNDNPPRFPQSTIHLRIPESSPVGTPIGSIKATDADTGKNAEVEYRIIDGDGTDMFDIVTQRDTQEGIITVRKPLDYETRRLYTLKVEAENTHVDPRFYYLGPFKDTTIVKISVEDVDEPPVFSRSSYLFEVHEDIELGTIIGTVMARDPDSASSPIRFSLDRHTDLDRIFNIHSGNGSIYTSKPLDREISQWHNLSVIAAEINNLKDTTRVPVYVRILDVNDNAPQFAVFYDTFVCENARAGQLIQTISAVDKDDPLGGQKFFFSLAAVNPNFTVQDNEDNTARILTRRNGFSRHEISTYLLPVVISDNDYPIQSSTGTLTIRVCACDSRGNMQSCNAEALLLPAGLSTGALIAILLCIIILLVIVVLFAALKRQRKKEPLILSKEDIRDNIVSYNDEGGGEEDTQAFDIGTLRNPAAIEDKKLRRDIIPETLFVPRRTPSAPDNTDVRDFINQRLKEHDSDPSAPPYDSLATYAYEGNDSIAESLSSLESGTTEGDQNYDYLREWGPRFNKLAEMYGGGESDKDAS.

The first 22 residues, 1–22 (MTIQQVLLLLLLWMWLLHPCRT), serve as a signal peptide directing secretion. The propeptide occupies 23-54 (EMLFRRTPDLRPKGFVGRTSGSDGKALHRQKR). Cadherin domains lie at 55-160 (GWMW…EPTF), 161-269 (PEEI…PPRF), 270-384 (PQST…PPVF), 385-487 (SRSS…DNAP), and 488-606 (QFAV…LLLP). The Extracellular portion of the chain corresponds to 55–606 (GWMWNQFFLL…SCNAEALLLP (552 aa)). N-linked (GlcNAc...) asparagine glycosylation occurs at Asn-256. 3 N-linked (GlcNAc...) asparagine glycosylation sites follow: Asn-438, Asn-456, and Asn-534. Residues 607–634 (AGLSTGALIAILLCIIILLVIVVLFAAL) traverse the membrane as a helical segment. The Cytoplasmic portion of the chain corresponds to 635–789 (KRQRKKEPLI…GGGESDKDAS (155 aa)).

The protein resides in the cell membrane. Functionally, cadherins are calcium-dependent cell adhesion proteins. They preferentially interact with themselves in a homophilic manner in connecting cells; cadherins may thus contribute to the sorting of heterogeneous cell types. In Gallus gallus (Chicken), this protein is Cadherin-10 (CDH10).